The following is a 483-amino-acid chain: Aspartyl/glutamyl-tRNA(Asn/Gln) amidotransferase subunit B (483 aa).

This sequence belongs to the GatB/GatE family. GatB subfamily. Heterotrimer of A, B and C subunits.

The catalysed reaction is L-glutamyl-tRNA(Gln) + L-glutamine + ATP + H2O = L-glutaminyl-tRNA(Gln) + L-glutamate + ADP + phosphate + H(+). It carries out the reaction L-aspartyl-tRNA(Asn) + L-glutamine + ATP + H2O = L-asparaginyl-tRNA(Asn) + L-glutamate + ADP + phosphate + 2 H(+). Functionally, allows the formation of correctly charged Asn-tRNA(Asn) or Gln-tRNA(Gln) through the transamidation of misacylated Asp-tRNA(Asn) or Glu-tRNA(Gln) in organisms which lack either or both of asparaginyl-tRNA or glutaminyl-tRNA synthetases. The reaction takes place in the presence of glutamine and ATP through an activated phospho-Asp-tRNA(Asn) or phospho-Glu-tRNA(Gln). This is Aspartyl/glutamyl-tRNA(Asn/Gln) amidotransferase subunit B from Rickettsia africae (strain ESF-5).